Consider the following 81-residue polypeptide: Protein I5 homolog (81 aa).

2 helical membrane passes run 8–28 (LITI…FSLV) and 53–73 (MEIF…AAYI).

Belongs to the Chordopoxvirinae I5 family.

It is found in the virion membrane. This chain is Protein I5 homolog, found in Vertebrata (FPV).